The following is a 430-amino-acid chain: Glutamate-1-semialdehyde 2,1-aminomutase (430 aa).

Residue lysine 265 is modified to N6-(pyridoxal phosphate)lysine.

It belongs to the class-III pyridoxal-phosphate-dependent aminotransferase family. HemL subfamily. In terms of assembly, homodimer. Requires pyridoxal 5'-phosphate as cofactor.

The protein resides in the cytoplasm. It catalyses the reaction (S)-4-amino-5-oxopentanoate = 5-aminolevulinate. It participates in porphyrin-containing compound metabolism; protoporphyrin-IX biosynthesis; 5-aminolevulinate from L-glutamyl-tRNA(Glu): step 2/2. The protein is Glutamate-1-semialdehyde 2,1-aminomutase of Shewanella sp. (strain MR-7).